The chain runs to 266 residues: uncharacterized protein (266 aa).

This is an uncharacterized protein from Mycobacterium tuberculosis (strain CDC 1551 / Oshkosh).